Here is a 159-residue protein sequence, read N- to C-terminus: Late embryogenesis abundant protein 50 (159 aa).

SMP domains lie at 30 to 87 (TTLT…RNQK) and 96 to 151 (NLGD…YKLN).

This sequence belongs to the LEA type SMP family.

It localises to the cytoplasm. Its subcellular location is the nucleus. In terms of biological role, LEA proteins are late embryonic proteins abundant in higher plant seed embryos. The function of those proteins is not known. The chain is Late embryogenesis abundant protein 50 from Arabidopsis thaliana (Mouse-ear cress).